The chain runs to 133 residues: Heat shock protein 15 (133 aa).

Residues 9-71 form the S4 RNA-binding domain; sequence VRLDKWLWAA…DERTVIVKAI (63 aa). A disordered region spans residues 105–133; sequence NALTMPHPDRRPDKKERRDLLRFKHGDSE. Over residues 111 to 133 the composition is skewed to basic and acidic residues; it reads HPDRRPDKKERRDLLRFKHGDSE.

Belongs to the HSP15 family. Monomer.

Functionally, involved in the recycling of free 50S ribosomal subunits that still carry a nascent chain. Binds RNA more specifically than DNA. Binds with very high affinity to the free 50S ribosomal subunit. Does not bind it when it is part of the 70S ribosome. In Escherichia coli O157:H7, this protein is Heat shock protein 15 (hslR).